Consider the following 97-residue polypeptide: Type VII secretion system extracellular protein A (97 aa).

Positions 61–93 form a coiled coil; the sequence is KVEKFAQLLEEIKQQLNSTADAVQEQDQQLSNN.

The protein belongs to the WXG100 family. sagEsxA-like subfamily. As to quaternary structure, forms both homodimers and heterodimers with EsxC.

The protein resides in the secreted. Its function is as follows. Virulence factor that is important for the establishment of infection in the host. EsxA is required for EsxB synthesis as well as secretion. Modulates host cell apoptotic pathways and mediates together with EsxB the release of S.aureus from the host cell. By acting on apoptosis, plays a role in the modulation of dendritic cell-mediated immunity. This chain is Type VII secretion system extracellular protein A, found in Staphylococcus aureus (strain USA300).